Here is a 481-residue protein sequence, read N- to C-terminus: Glutamine synthetase (481 aa).

The region spanning 22-106 is the GS beta-grasp domain; sequence NEVEFVDFRF…VFCDVYDVYK (85 aa). The 368-residue stretch at 114–481 folds into the GS catalytic domain; it reads PRSIAKKALK…PFEFITTYSC (368 aa). Residues Glu-139, Glu-141, Glu-223, and Glu-230 each coordinate Mg(2+). L-glutamate contacts are provided by residues 274-275 and Gly-275; that span reads NG. His-279 contacts Mg(2+). Residues 281-283 and Ser-283 contribute to the ATP site; that span reads HVS. Residues Arg-331, Glu-337, and Arg-349 each coordinate L-glutamate. Positions 349 and 354 each coordinate ATP. Glu-367 is a Mg(2+) binding site. An L-glutamate-binding site is contributed by Arg-369.

This sequence belongs to the glutamine synthetase family. As to quaternary structure, oligomer of 12 subunits arranged in the form of two hexameric ring. The cofactor is Mg(2+).

It localises to the cytoplasm. The catalysed reaction is L-glutamate + NH4(+) + ATP = L-glutamine + ADP + phosphate + H(+). With respect to regulation, the activity of this enzyme could be controlled by adenylation under conditions of abundant glutamine. Functionally, catalyzes the ATP-dependent biosynthesis of glutamine from glutamate and ammonia. The chain is Glutamine synthetase from Helicobacter pylori (strain J99 / ATCC 700824) (Campylobacter pylori J99).